The primary structure comprises 399 residues: 26S proteasome regulatory subunit 10B homolog A (399 aa).

Thr-2 carries the N-acetylthreonine modification. ATP is bound at residue 180 to 187 (GPPGTGKT). A Glycyl lysine isopeptide (Lys-Gly) (interchain with G-Cter in ubiquitin) cross-link involves residue Lys-203.

Belongs to the AAA ATPase family. Component of the 19S regulatory particle (RP/PA700) base subcomplex of the 26S proteasome. The 26S proteasome is composed of a core protease (CP), known as the 20S proteasome, capped at one or both ends by the 19S regulatory particle (RP/PA700). The RP/PA700 complex is composed of at least 17 different subunits in two subcomplexes, the base and the lid, which form the portions proximal and distal to the 20S proteolytic core, respectively.

It localises to the cytoplasm. The protein resides in the nucleus. The 26S proteasome is involved in the ATP-dependent degradation of ubiquitinated proteins. The regulatory (or ATPase) complex confers ATP dependency and substrate specificity to the 26S complex. This Arabidopsis thaliana (Mouse-ear cress) protein is 26S proteasome regulatory subunit 10B homolog A (RPT4A).